Here is a 558-residue protein sequence, read N- to C-terminus: Protein SET DOMAIN GROUP 41 (558 aa).

An SET domain is found at 115 to 249 (PSISVAIHHA…SGEEITVSYI (135 aa)).

This sequence belongs to the class V-like SAM-binding methyltransferase superfamily.

The sequence is that of Protein SET DOMAIN GROUP 41 (SDG41) from Arabidopsis thaliana (Mouse-ear cress).